Here is a 197-residue protein sequence, read N- to C-terminus: MATDAKLVKTLREMTGAGILECKKALEETGGNLEEAVELLRKRGIAKAAKKAGRETKEGIIHSYIHAGGRVGVLLELNCETDFVARNEVFKELANEIALQIAAMKPQYVSREDIPREVIEKEGEIAREAAIAEGKPEHIAEKIAEGKLEKFFKEVCLLEQPYIKDDKKTIEDLIKEYIAKLGENIKVSRFCRYEIGE.

An involved in Mg(2+) ion dislocation from EF-Tu region spans residues 81-84; the sequence is TDFV.

It belongs to the EF-Ts family.

It localises to the cytoplasm. In terms of biological role, associates with the EF-Tu.GDP complex and induces the exchange of GDP to GTP. It remains bound to the aminoacyl-tRNA.EF-Tu.GTP complex up to the GTP hydrolysis stage on the ribosome. This chain is Elongation factor Ts, found in Persephonella marina (strain DSM 14350 / EX-H1).